The primary structure comprises 190 residues: Potassium-transporting ATPase KdpC subunit (190 aa).

The chain crosses the membrane as a helical span at residues 10-30 (TFLFLLLITGGVYPLLTTALG).

This sequence belongs to the KdpC family. As to quaternary structure, the system is composed of three essential subunits: KdpA, KdpB and KdpC.

It localises to the cell inner membrane. Functionally, part of the high-affinity ATP-driven potassium transport (or Kdp) system, which catalyzes the hydrolysis of ATP coupled with the electrogenic transport of potassium into the cytoplasm. This subunit acts as a catalytic chaperone that increases the ATP-binding affinity of the ATP-hydrolyzing subunit KdpB by the formation of a transient KdpB/KdpC/ATP ternary complex. This Shigella flexneri serotype 5b (strain 8401) protein is Potassium-transporting ATPase KdpC subunit.